The primary structure comprises 396 residues: L-tyrosine/L-aspartate decarboxylase (396 aa).

At Lys245 the chain carries N6-(pyridoxal phosphate)lysine.

The protein belongs to the group II decarboxylase family. MfnA subfamily. As to quaternary structure, homodimer. Pyridoxal 5'-phosphate is required as a cofactor.

The catalysed reaction is L-tyrosine + H(+) = tyramine + CO2. The enzyme catalyses L-aspartate + H(+) = beta-alanine + CO2. It functions in the pathway cofactor biosynthesis; methanofuran biosynthesis. The protein operates within cofactor biosynthesis; coenzyme A biosynthesis. Its activity is regulated as follows. Inhibited by hydroxylamine and O-methylhydroxylamine. Catalyzes the decarboxylation of L-tyrosine to produce tyramine for methanofuran biosynthesis. Can also catalyze the decarboxylation of L-aspartate to produce beta-alanine for coenzyme A (CoA) biosynthesis. This chain is L-tyrosine/L-aspartate decarboxylase, found in Methanocaldococcus jannaschii (strain ATCC 43067 / DSM 2661 / JAL-1 / JCM 10045 / NBRC 100440) (Methanococcus jannaschii).